The sequence spans 700 residues: Transketolase (700 aa).

Substrate is bound at residue H45. Residues T48, H85, and 133-135 contribute to the thiamine diphosphate site; that span reads GPL. D177 contributes to the Mg(2+) binding site. Thiamine diphosphate contacts are provided by G178 and N207. N207 and I209 together coordinate Mg(2+). The substrate site is built by H283, R378, and S405. H283 is a binding site for thiamine diphosphate. E441 acts as the Proton donor in catalysis. Position 467 (F467) interacts with thiamine diphosphate. Residues H491, D499, and R552 each coordinate substrate.

It belongs to the transketolase family. Homodimer. It depends on Mg(2+) as a cofactor. Requires Ca(2+) as cofactor. Mn(2+) is required as a cofactor. The cofactor is Co(2+). Thiamine diphosphate serves as cofactor.

It catalyses the reaction D-sedoheptulose 7-phosphate + D-glyceraldehyde 3-phosphate = aldehydo-D-ribose 5-phosphate + D-xylulose 5-phosphate. Catalyzes the transfer of a two-carbon ketol group from a ketose donor to an aldose acceptor, via a covalent intermediate with the cofactor thiamine pyrophosphate. The sequence is that of Transketolase (tkt) from Mycobacterium bovis (strain ATCC BAA-935 / AF2122/97).